The following is a 457-amino-acid chain: Carboxypeptidase N catalytic chain (457 aa).

The N-terminal stretch at 1-23 is a signal peptide; the sequence is MPDLPSAFLPLLLLSKFVTPVTF. A Peptidase M14 domain is found at 24-338; the sequence is RHHRYDDLVR…EALIQFLEQV (315 aa). A disulfide bridge links Cys-42 with Cys-104. Residues His-86, Glu-89, and His-216 each coordinate Zn(2+). A disulfide bridge connects residues Cys-271 and Cys-311. The Proton donor/acceptor role is filled by Glu-308. O-linked (GalNAc...) threonine glycans are attached at residues Thr-400, Thr-402, and Thr-409. Residues 418-457 form a disordered region; it reads STTQVHPVQKAPGRGQGSRAKQPRTSRKKDQAAKRHRGPA.

The protein belongs to the peptidase M14 family. In terms of assembly, tetramer of two catalytic chains and two glycosylated inactive chains. Zn(2+) serves as cofactor. Plasma. Expressed in liver.

The protein resides in the secreted. It is found in the extracellular space. The enzyme catalyses Release of a C-terminal basic amino acid, preferentially lysine.. Its function is as follows. Protects the body from potent vasoactive and inflammatory peptides containing C-terminal Arg or Lys (such as kinins or anaphylatoxins) which are released into the circulation. This Rattus norvegicus (Rat) protein is Carboxypeptidase N catalytic chain (Cpn1).